Consider the following 85-residue polypeptide: Phosphocarrier protein HPr (85 aa).

The HPr domain maps to 1–85; sequence MFQQEVTITA…HLVKLMAELE (85 aa). H15 functions as the Pros-phosphohistidine intermediate in the catalytic mechanism.

This sequence belongs to the HPr family.

It is found in the cytoplasm. In terms of biological role, general (non sugar-specific) component of the phosphoenolpyruvate-dependent sugar phosphotransferase system (sugar PTS). This major carbohydrate active-transport system catalyzes the phosphorylation of incoming sugar substrates concomitantly with their translocation across the cell membrane. The phosphoryl group from phosphoenolpyruvate (PEP) is transferred to the phosphoryl carrier protein HPr by enzyme I. Phospho-HPr then transfers it to the PTS EIIA domain. The protein is Phosphocarrier protein HPr (ptsH) of Escherichia coli O157:H7.